A 214-amino-acid chain; its full sequence is NADH-quinone oxidoreductase subunit C (214 aa).

It belongs to the complex I 30 kDa subunit family. As to quaternary structure, NDH-1 is composed of 14 different subunits. Subunits NuoB, C, D, E, F, and G constitute the peripheral sector of the complex.

It localises to the cell inner membrane. The enzyme catalyses a quinone + NADH + 5 H(+)(in) = a quinol + NAD(+) + 4 H(+)(out). In terms of biological role, NDH-1 shuttles electrons from NADH, via FMN and iron-sulfur (Fe-S) centers, to quinones in the respiratory chain. The immediate electron acceptor for the enzyme in this species is believed to be ubiquinone. Couples the redox reaction to proton translocation (for every two electrons transferred, four hydrogen ions are translocated across the cytoplasmic membrane), and thus conserves the redox energy in a proton gradient. The sequence is that of NADH-quinone oxidoreductase subunit C from Caulobacter sp. (strain K31).